The following is a 64-amino-acid chain: Beta-defensin 1 (64 aa).

An N-terminal signal peptide occupies residues 1 to 20; the sequence is MRLHRLLLVFLLMVLLPVPG. A propeptide spanning residues 21-23 is cleaved from the precursor; that stretch reads LLK. 3 disulfides stabilise this stretch: C31–C60, C38–C53, and C43–C61.

The protein belongs to the beta-defensin family. As to quaternary structure, monomer. Homodimer.

The protein localises to the secreted. Its subcellular location is the membrane. Has bactericidal activity. May act as a ligand for C-C chemokine receptor CCR6. Positively regulates the sperm motility and bactericidal activity in a CCR6-dependent manner. Binds to CCR6 and triggers Ca2+ mobilization in the sperm which is important for its motility. The sequence is that of Beta-defensin 1 (DEFB1) from Sus scrofa (Pig).